Consider the following 210-residue polypeptide: LexA repressor (210 aa).

A DNA-binding region (H-T-H motif) is located at residues 30 to 50; the sequence is RVEIAREIGFKSPNAAEEHLK. Catalysis depends on for autocatalytic cleavage activity residues S127 and K164.

This sequence belongs to the peptidase S24 family. Homodimer.

It catalyses the reaction Hydrolysis of Ala-|-Gly bond in repressor LexA.. In terms of biological role, represses a number of genes involved in the response to DNA damage (SOS response), including recA and lexA. In the presence of single-stranded DNA, RecA interacts with LexA causing an autocatalytic cleavage which disrupts the DNA-binding part of LexA, leading to derepression of the SOS regulon and eventually DNA repair. The protein is LexA repressor of Actinobacillus pleuropneumoniae serotype 5b (strain L20).